The chain runs to 279 residues: Tryptophan synthase alpha chain (279 aa).

Active-site proton acceptor residues include glutamate 49 and aspartate 60.

The protein belongs to the TrpA family. Tetramer of two alpha and two beta chains.

It carries out the reaction (1S,2R)-1-C-(indol-3-yl)glycerol 3-phosphate + L-serine = D-glyceraldehyde 3-phosphate + L-tryptophan + H2O. Its pathway is amino-acid biosynthesis; L-tryptophan biosynthesis; L-tryptophan from chorismate: step 5/5. In terms of biological role, the alpha subunit is responsible for the aldol cleavage of indoleglycerol phosphate to indole and glyceraldehyde 3-phosphate. The protein is Tryptophan synthase alpha chain of Nitrosospira multiformis (strain ATCC 25196 / NCIMB 11849 / C 71).